Here is a 399-residue protein sequence, read N- to C-terminus: Protochlorophyllide reductase, chloroplastic (399 aa).

The transit peptide at 1-64 (MALQTASMLP…RQKVGAVRAE (64 aa)) directs the protein to the chloroplast.

The protein belongs to the short-chain dehydrogenases/reductases (SDR) family. POR subfamily.

It localises to the plastid. It is found in the chloroplast. It catalyses the reaction chlorophyllide a + NADP(+) = protochlorophyllide a + NADPH + H(+). It participates in porphyrin-containing compound metabolism; chlorophyll biosynthesis. Phototransformation of protochlorophyllide (Pchlide) to chlorophyllide (Chlide). This chain is Protochlorophyllide reductase, chloroplastic (3PCR), found in Pisum sativum (Garden pea).